A 348-amino-acid chain; its full sequence is Peptidyl-Lys metalloendopeptidase (348 aa).

A signal peptide spans 1 to 18 (MFSSVMVALVSLAVAVSA). A propeptide spanning residues 19–181 (NPGLSLKVSG…RATPTLTRPV (163 aa)) is cleaved from the precursor. 2 disulfide bridges follow: Cys186-Cys256 and Cys258-Cys278. A glycan (O-linked (Man) threonine; partial) is linked at Thr223. His298 contacts Zn(2+). The active site involves Glu299. The Zn(2+) site is built by His302 and Asp311.

Zn(2+) serves as cofactor.

The protein resides in the secreted. The enzyme catalyses Preferential cleavage in proteins: -Xaa-|-Lys- (in which Xaa may be Pro).. With respect to regulation, inhibited by chelating agents such as EDTA and 1,10-phenanthroline. The polypeptide is Peptidyl-Lys metalloendopeptidase (MEP) (Grifola frondosa (Maitake)).